We begin with the raw amino-acid sequence, 443 residues long: Gasdermin-A2 (443 aa).

The triggers pyroptosis stretch occupies residues 1–249; sequence MSMFEDVTRA…QGSTVQMISG (249 aa). Position 9-13 (9-13) interacts with a cardiolipin; the sequence is RALAR. A run of 4 beta stranded transmembrane segments spans residues 78–95, 99–120, 164–179, and 183–197; these read NFSFKNMLDVRVEGDVEV, MKVKGTVGLSQSSTLEVQMLSV, VTLKRASNAISKFSLN, and LGLQGSVNHKEAVTI. Residues 249-312 adopt a coiled-coil conformation; it reads GEMHEDFKTL…GALDKGHEVT (64 aa).

It belongs to the gasdermin family. As to quaternary structure, homooligomer; homooligomeric ring-shaped pore complex containing 18-36 subunits when inserted in the membrane. Post-translationally, cleavage relieves autoinhibition by releasing the N-terminal moiety (Gasdermin-A2, N-terminal) that initiates pyroptosis. In contrast to Gsdma, not cleaved by bacterial effector protein SpeB. In terms of processing, palmitoylated. In terms of tissue distribution, expressed in the gastrointestinal tract, specifically from the middle to the upper region of the gastric mucosa in the glandular stomach.

It is found in the cytoplasm. The protein resides in the perinuclear region. It localises to the cytosol. The protein localises to the cell membrane. The full-length protein before cleavage is inactive: intramolecular interactions between N- and C-terminal domains mediate autoinhibition in the absence of activation signal. The intrinsic pyroptosis-inducing activity is carried by the released N-terminal moiety (Gasdermin-A2, N-terminal). Its function is as follows. This form constitutes the precursor of the pore-forming protein and acts as a sensor of infection: upon bacterial infection, specifically cleaved by some bacterial effector protein, releasing the N-terminal moiety (Gasdermin-A2, N-terminal) that binds to membranes and forms pores, triggering pyroptosis. Pore-forming protein that causes membrane permeabilization and pyroptosis. Released upon cleavage of Gasdermin-A2, and binds to membrane inner leaflet lipids. Homooligomerizes within the membrane and forms pores of 10-15 nanometers (nm) of inner diameter, triggering pyroptosis. Binds to membrane inner leaflet lipids, such as phosphatidylinositol (4,5)-bisphosphate. This Mus musculus (Mouse) protein is Gasdermin-A2.